We begin with the raw amino-acid sequence, 248 residues long: Ras-related protein RSR1 (248 aa).

A GTP-binding site is contributed by 10 to 17 (GAGGVGKS). Residues 32–40 (YDPTIEDSY) carry the Effector region motif. Residues 57 to 61 (DTAGV) and 116 to 119 (NKCD) each bind GTP. The interval 182–248 (LQKQQQQQQQ…SSGSKFCTII (67 aa)) is disordered. Residues 184 to 214 (KQQQQQQQEQDAEGQQQQQKSGKSKSSATQK) are compositionally biased toward low complexity. 2 stretches are compositionally biased toward polar residues: residues 219-231 (DGQT…LKQS) and 238-248 (SSSGSKFCTII). C245 carries the post-translational modification Cysteine methyl ester. C245 carries S-geranylgeranyl cysteine lipidation. Residues 246 to 248 (TII) constitute a propeptide, removed in mature form.

This sequence belongs to the small GTPase superfamily. Ras family.

Its subcellular location is the cell membrane. It catalyses the reaction GTP + H2O = GDP + phosphate + H(+). With respect to regulation, alternates between an inactive form bound to GDP and an active form bound to GTP. Activated by a guanine nucleotide-exchange factor (GEF) and inactivated by a GTPase-activating protein (GAP). Its function is as follows. Ras-related protein which binds GDP/GTP and possesses intrinsic GTPase activity. Involved in both yeast and hypha development. In the yeast phase, it is required for normal (polar) bud site selection and is involved in cell morphogenesis; in the yeast-mycelial transition it is involved in germ tube emergence; and in the development of the hyphae it is involved in cell elongation. The polypeptide is Ras-related protein RSR1 (RSR1) (Candida albicans (Yeast)).